Reading from the N-terminus, the 152-residue chain is Ribosome maturation factor RimP (152 aa).

It belongs to the RimP family.

Its subcellular location is the cytoplasm. Required for maturation of 30S ribosomal subunits. This Pseudomonas putida (strain GB-1) protein is Ribosome maturation factor RimP.